An 846-amino-acid chain; its full sequence is Major vault protein beta (846 aa).

Alanine 2 is modified (N-acetylalanine). MVP repeat units lie at residues 2–60 (ATPV…IPPR), 61–115 (QYCI…QPVP), 116–172 (LQVI…EPVR), 173–225 (AVII…GFIQ), 226–280 (ALVL…RDIK), 281–332 (AITL…IQNV), 333–388 (NVLS…RRKR), 389–458 (IPLD…STKV), and 459–521 (ITYR…FLGP).

In terms of assembly, the vault ribonucleoprotein particle is a huge (400 A x 670 A) cage structure of 12.9 MDa. It consists of a dimer of half-vaults, with each half-vault comprising 39 identical major vault protein (MVP) chains. Dictyostelium is one of the few organisms in which the major component is actually two proteins (alpha and beta).

The protein localises to the cytoplasm. The protein resides in the nucleus. In terms of biological role, unknown, though MVP-beta is required for normal vault structure. This is Major vault protein beta (mvpB) from Dictyostelium discoideum (Social amoeba).